Here is a 333-residue protein sequence, read N- to C-terminus: Probable tRNA pseudouridine synthase B (333 aa).

The active-site Nucleophile is the Asp-71. Residues 238–313 (LPKIWVRDSA…LVARTDRVVM (76 aa)) form the PUA domain.

The protein belongs to the pseudouridine synthase TruB family. Type 2 subfamily.

The enzyme catalyses uridine(55) in tRNA = pseudouridine(55) in tRNA. Its function is as follows. Could be responsible for synthesis of pseudouridine from uracil-55 in the psi GC loop of transfer RNAs. This is Probable tRNA pseudouridine synthase B from Pyrobaculum calidifontis (strain DSM 21063 / JCM 11548 / VA1).